The sequence spans 56 residues: Keratin-associated protein 20-1 (56 aa).

Belongs to the KRTAP type 20 family. Interacts with hair keratins.

Its function is as follows. In the hair cortex, hair keratin intermediate filaments are embedded in an interfilamentous matrix, consisting of hair keratin-associated proteins (KRTAP), which are essential for the formation of a rigid and resistant hair shaft through their extensive disulfide bond cross-linking with abundant cysteine residues of hair keratins. The matrix proteins include the high-sulfur and high-glycine-tyrosine keratins. This is Keratin-associated protein 20-1 (KRTAP20-1) from Homo sapiens (Human).